The chain runs to 332 residues: Putative peptide import ATP-binding protein BMEII0206 (332 aa).

The 251-residue stretch at 11-261 folds into the ABC transporter domain; sequence LEVSNLSVDF…PLHPYTEGLL (251 aa). 47 to 54 provides a ligand contact to ATP; it reads GESGSGKS.

It belongs to the ABC transporter superfamily. As to quaternary structure, the complex is composed of two ATP-binding proteins (BMEII0205 and BMEII0206), two transmembrane proteins (BMEII0207/BMEII0208 and BMEII0209) and a solute-binding protein (BMEII0210).

It is found in the cell inner membrane. In terms of biological role, probably part of an ABC transporter complex that could be involved in peptide import. Probably responsible for energy coupling to the transport system. This is Putative peptide import ATP-binding protein BMEII0206 from Brucella melitensis biotype 1 (strain ATCC 23456 / CCUG 17765 / NCTC 10094 / 16M).